The chain runs to 470 residues: O-acyltransferase pboC (470 aa).

Catalysis depends on proton acceptor residues H149 and D386.

It belongs to the plant acyltransferase family. As to quaternary structure, monomer.

The protein operates within secondary metabolite biosynthesis. O-acetyltransferase; part of the gene cluster that mediates the biosynthesis of protubonine B, a hydroxylated and diacetylated cyclo-L-Trp-L-Leu derivative. Within the pathway, pboC catalyzes the acetylation of protubonine D at the hydroxy group to produce protubonine C. The first step of the protubonine B synthesis is performed by the nonribosomal peptide synthetase pboA that catalyzes the formation of cyclo-L-Trp-L-Leu by condensing L-Leu with L-Trp. The flavin-dependent monooxygenase pboD is responsible for hydroxylation at C-3 of the indole ring and subsequent formation of the pyrrolidine ring, leadind to protubonine D. Protubonine D is further diacetylated by two acetyltransferases, pboB and pboC, to form the final product protubonine B via protubonine C. The chain is O-acyltransferase pboC from Aspergillus ustus.